The primary structure comprises 687 residues: Bifunctional lysine-specific demethylase and histidyl-hydroxylase NO66 (687 aa).

Residues 1–174 (MSDKNKKVSA…RSCPLPSKKN (174 aa)) are disordered. Over residues 23–32 (DVQKGTKNSD) the composition is skewed to basic and acidic residues. 2 stretches are compositionally biased toward low complexity: residues 33–50 (KNGAAKNNNNRNLASKNG) and 58–74 (KKNGSYSDGDNGSSSSS). The segment covering 75–96 (GEDEEDDSTDSSDEYESSESGE) has biased composition (acidic residues). Composition is skewed to polar residues over residues 100 to 116 (LNSHSSQSSPETPANTR) and 136 to 156 (RTSSTPVGQSTSAARSTQQPK). Residues 347–483 (NPSSYLVQLR…NLMEKLMPLV (137 aa)) enclose the JmjC domain. The Fe cation site is built by His387, Asp389, and His449.

This sequence belongs to the ROX family. NO66 subfamily. The cofactor is Fe(2+).

The protein localises to the nucleus. It carries out the reaction N(6),N(6)-dimethyl-L-lysyl(36)-[histone H3] + 2 2-oxoglutarate + 2 O2 = L-lysyl(36)-[histone H3] + 2 formaldehyde + 2 succinate + 2 CO2. Functionally, oxygenase that can act as both a histone lysine demethylase and a ribosomal histidine hydroxylase. Specifically demethylates 'Lys-4' (H3K4me) and 'Lys-36' (H3K36me) of histone H3, thereby playing a central role in histone code. The sequence is that of Bifunctional lysine-specific demethylase and histidyl-hydroxylase NO66 from Drosophila persimilis (Fruit fly).